The chain runs to 267 residues: 2-keto-3-deoxy-L-rhamnonate aldolase (267 aa).

The active-site Proton acceptor is the H49. Q151 is a binding site for substrate. A Mg(2+)-binding site is contributed by E153. Substrate contacts are provided by A178 and D179. D179 is a Mg(2+) binding site.

Belongs to the HpcH/HpaI aldolase family. KDR aldolase subfamily. In terms of assembly, homohexamer. The cofactor is Mg(2+).

The enzyme catalyses 2-dehydro-3-deoxy-L-rhamnonate = (S)-lactaldehyde + pyruvate. Functionally, catalyzes the reversible retro-aldol cleavage of 2-keto-3-deoxy-L-rhamnonate (KDR) to pyruvate and lactaldehyde. This chain is 2-keto-3-deoxy-L-rhamnonate aldolase, found in Escherichia coli O6:K15:H31 (strain 536 / UPEC).